The sequence spans 239 residues: Ribonuclease PH (239 aa).

Phosphate contacts are provided by residues R86 and 124–126 (GTR).

Belongs to the RNase PH family. In terms of assembly, homohexameric ring arranged as a trimer of dimers.

The enzyme catalyses tRNA(n+1) + phosphate = tRNA(n) + a ribonucleoside 5'-diphosphate. Phosphorolytic 3'-5' exoribonuclease that plays an important role in tRNA 3'-end maturation. Removes nucleotide residues following the 3'-CCA terminus of tRNAs; can also add nucleotides to the ends of RNA molecules by using nucleoside diphosphates as substrates, but this may not be physiologically important. Probably plays a role in initiation of 16S rRNA degradation (leading to ribosome degradation) during starvation. The protein is Ribonuclease PH of Rhizobium johnstonii (strain DSM 114642 / LMG 32736 / 3841) (Rhizobium leguminosarum bv. viciae).